A 304-amino-acid polypeptide reads, in one-letter code: MSMLSPEKPSEPAKIIDGKGIARALTDQVGREVAKFVEQGNTIPGLAVVLVGNDPASEVYVKNKAIQTHRVGMRSFMHMLPQSTSQDELLDLIAQLNANPKIHGILVQLPLPAQIDPVAVTNAIAPHKDVDGLGEVNAGRLSLGIDGIVPCTPLGCLMLLQSVHKDMTGMHAVVIGASNLVGKPMAQLLLKENCTVTVAHIHTRNTKELAREADILVVATGKSELVRGDWIKPGATVIDVGITRVPAENGKTRLVGDVAFDEAFPIAGHITPVPGGVGPMTIACLLHNTLQAARATQAVADASS.

NADP(+) contacts are provided by residues 176 to 178, Ile201, and Ile242; that span reads GAS.

This sequence belongs to the tetrahydrofolate dehydrogenase/cyclohydrolase family. In terms of assembly, homodimer.

The catalysed reaction is (6R)-5,10-methylene-5,6,7,8-tetrahydrofolate + NADP(+) = (6R)-5,10-methenyltetrahydrofolate + NADPH. It carries out the reaction (6R)-5,10-methenyltetrahydrofolate + H2O = (6R)-10-formyltetrahydrofolate + H(+). Its pathway is one-carbon metabolism; tetrahydrofolate interconversion. Catalyzes the oxidation of 5,10-methylenetetrahydrofolate to 5,10-methenyltetrahydrofolate and then the hydrolysis of 5,10-methenyltetrahydrofolate to 10-formyltetrahydrofolate. In Gluconobacter oxydans (strain 621H) (Gluconobacter suboxydans), this protein is Bifunctional protein FolD.